The sequence spans 97 residues: Gibberellin-regulated protein 5 (97 aa).

The signal sequence occupies residues 1–27 (MANCIRRNALFFLTLLFLLSVSNLVQA).

It belongs to the GASA family. Six disulfide bonds may be present. In terms of tissue distribution, expressed in roots, root hairs, vasculature of cotyledons and hypocotyls, shoot apex, leaf veins, stems, flower receptacles, pollen, filaments, anthers and siliques.

The protein resides in the secreted. It is found in the cell wall. The protein localises to the extracellular space. Its subcellular location is the extracellular matrix. Its function is as follows. Gibberellin-regulated protein that acts as a negative regulator of gibberellin-induced flowering and stem growth. May inhibit flowering and inflorescence growth via a pathway involving GAI and by enhancing FLC expression and repressing FT and LFY. Acts as a negative regulator in thermotolerance by resogulating both salicylic acid (SA) signaling and heat shock-protein accumulation. The polypeptide is Gibberellin-regulated protein 5 (GASA5) (Arabidopsis thaliana (Mouse-ear cress)).